Here is a 561-residue protein sequence, read N- to C-terminus: 65 kDa phosphoprotein (561 aa).

Disordered stretches follow at residues 389–475 (DEGA…SDNE) and 534–561 (AAQP…KHRG). Positions 395–411 (GDDDVWTSGSDSDEELV) are enriched in acidic residues. Residues 440–449 (ASSATACTSG) are compositionally biased toward low complexity. A compositionally biased stretch (acidic residues) spans 464–473 (PEEDTDEDSD). Ser-472 bears the Phosphoserine mark. Positions 537–560 (PKRRRHRQDALPGPCIASTPKKHR) match the Bipartite nuclear localization signal motif.

It belongs to the herpesviridae pp65 family. As to quaternary structure, interacts with host NCL/nucleolin. Interacts with host IFI16. Interacts with host CGAS; this interaction inhibits CGAS enzymatic activity. Phosphorylation may play a role in the localization of the protein.

It is found in the virion tegument. It localises to the host nucleus. Its subcellular location is the host cytoplasm. Its function is as follows. Counteracts the host antiviral immune response when activated and phosphorylated, by preventing host IRF3 from entering the nucleus. Also inhibits the type I interferon production by inactivating the enzymatic activity of DNA sensor CGAS without affecting STING1. Participates in the transactivation of viral major immediate-early genes by the recruitment of host IFI16 to the promoters pf these genes. The sequence is that of 65 kDa phosphoprotein (UL83) from Human cytomegalovirus (strain AD169) (HHV-5).